The following is a 66-amino-acid chain: Large ribosomal subunit protein bL33c (66 aa).

The protein belongs to the bacterial ribosomal protein bL33 family.

It localises to the plastid. The protein localises to the chloroplast. In Oenothera argillicola (Appalachian evening primrose), this protein is Large ribosomal subunit protein bL33c.